The primary structure comprises 92 residues: Small ribosomal subunit protein uS17 (92 aa).

Belongs to the universal ribosomal protein uS17 family. As to quaternary structure, part of the 30S ribosomal subunit.

Its function is as follows. One of the primary rRNA binding proteins, it binds specifically to the 5'-end of 16S ribosomal RNA. The sequence is that of Small ribosomal subunit protein uS17 from Bordetella petrii (strain ATCC BAA-461 / DSM 12804 / CCUG 43448).